A 338-amino-acid polypeptide reads, in one-letter code: Putative ankyrin repeat protein CBU_0781 (338 aa).

Positions 1 to 31 (MSRRETPTSTISSTPTGTRTPRRRLSRKGHP) are disordered. Low complexity predominate over residues 7–19 (PTSTISSTPTGTR). Over residues 20–31 (TPRRRLSRKGHP) the composition is skewed to basic residues. ANK repeat units follow at residues 92 to 124 (QGDT…IVNK) and 125 to 157 (LGET…IKYK). Residues 197–242 (SQIMASDKEIDEIIRNARNLQIIKKEKREAEERARTKKSKQITLQR) are a coiled coil. The disordered stretch occupies residues 319–338 (KKEDTTLSRNNSLSCLSSPR). Positions 325 to 338 (LSRNNSLSCLSSPR) are enriched in low complexity.

This is Putative ankyrin repeat protein CBU_0781 from Coxiella burnetii (strain RSA 493 / Nine Mile phase I).